A 325-amino-acid chain; its full sequence is Eukaryotic translation initiation factor 3 subunit I (325 aa).

WD repeat units lie at residues 8 to 47 (GHERSITQIKYNREGDLLFTVAKDPIVNVWYSVNGERLGT), 50 to 89 (GHTGAVWCVDADWDTRHVLTGSADNSCRLWDCETGKQLAL), 144 to 183 (CSDSKITSAVWGPLGEFIIAGHENGELNQFSAKSGEQLSN), 186 to 225 (EHTKQINDIQTSRDMTMFITASKDNTAKLFDCTSLKHLKT), and 283 to 324 (GHFG…FEFE).

The protein belongs to the eIF-3 subunit I family. Component of the eukaryotic translation initiation factor 3 (eIF-3) complex, which is composed of 13 subunits: EIF3A, EIF3B, EIF3C, EIF3D, EIF3E, EIF3F, EIF3G, EIF3H, EIF3I, EIF3J, EIF3K, EIF3L and EIF3M.

It is found in the cytoplasm. Functionally, component of the eukaryotic translation initiation factor 3 (eIF-3) complex, which is involved in protein synthesis of a specialized repertoire of mRNAs and, together with other initiation factors, stimulates binding of mRNA and methionyl-tRNAi to the 40S ribosome. The eIF-3 complex specifically targets and initiates translation of a subset of mRNAs involved in cell proliferation. This is Eukaryotic translation initiation factor 3 subunit I from Taeniopygia guttata (Zebra finch).